The chain runs to 244 residues: tRNA pseudouridine synthase B (244 aa).

Aspartate 46 acts as the Nucleophile in catalysis.

It belongs to the pseudouridine synthase TruB family. Type 1 subfamily.

It carries out the reaction uridine(55) in tRNA = pseudouridine(55) in tRNA. In terms of biological role, responsible for synthesis of pseudouridine from uracil-55 in the psi GC loop of transfer RNAs. The protein is tRNA pseudouridine synthase B of Bordetella bronchiseptica (strain ATCC BAA-588 / NCTC 13252 / RB50) (Alcaligenes bronchisepticus).